The primary structure comprises 65 residues: UPF0370 protein Ent638_2968 (65 aa).

Residues 4 to 24 (LSKYWWILVLVFLVGVLLNVI) form a helical membrane-spanning segment. Positions 39-65 (KPELPPHRDFNDKWDDDDNWPKKDQKK) are disordered. Basic and acidic residues predominate over residues 42–65 (LPPHRDFNDKWDDDDNWPKKDQKK).

The protein belongs to the UPF0370 family.

It localises to the cell membrane. This Enterobacter sp. (strain 638) protein is UPF0370 protein Ent638_2968.